We begin with the raw amino-acid sequence, 403 residues long: Tryptophan synthase beta chain (403 aa).

K87 is subject to N6-(pyridoxal phosphate)lysine.

This sequence belongs to the TrpB family. Tetramer of two alpha and two beta chains. Pyridoxal 5'-phosphate is required as a cofactor.

The catalysed reaction is (1S,2R)-1-C-(indol-3-yl)glycerol 3-phosphate + L-serine = D-glyceraldehyde 3-phosphate + L-tryptophan + H2O. It functions in the pathway amino-acid biosynthesis; L-tryptophan biosynthesis; L-tryptophan from chorismate: step 5/5. Its function is as follows. The beta subunit is responsible for the synthesis of L-tryptophan from indole and L-serine. The chain is Tryptophan synthase beta chain from Shewanella loihica (strain ATCC BAA-1088 / PV-4).